The following is a 76-amino-acid chain: uncharacterized protein (76 aa).

The chain crosses the membrane as a helical span at residues 12–32; it reads LPCGAFFISVLFFFNAVCIVS.

The protein resides in the cell membrane. This is an uncharacterized protein from Escherichia coli O157:H7.